The primary structure comprises 425 residues: Trigger factor (425 aa).

The region spanning 163 to 248 (GDTAVIDFEG…VHEIKTKELP (86 aa)) is the PPIase FKBP-type domain.

It belongs to the FKBP-type PPIase family. Tig subfamily.

It is found in the cytoplasm. It carries out the reaction [protein]-peptidylproline (omega=180) = [protein]-peptidylproline (omega=0). Its function is as follows. Involved in protein export. Acts as a chaperone by maintaining the newly synthesized protein in an open conformation. Functions as a peptidyl-prolyl cis-trans isomerase. The sequence is that of Trigger factor from Bacillus anthracis (strain A0248).